Reading from the N-terminus, the 174-residue chain is MSTSTRRVVRFRLSFASQPSPVCVFFGLNSQLLWQAAPCHVSFHLICASNNELRTKSRPRLLQDEKRAVWRRLRQFCPVVFPRIAQSMNALALRGATREGSALAFFGQLAKYLNRIGKRAEKSKPSDWEKYDVKYPNKPHSVRSVTLNAGFRRSGNHSAGNVHPASPMIKVQGG.

Positions 153–174 (RSGNHSAGNVHPASPMIKVQGG) are disordered.

This is an uncharacterized protein from Sinorhizobium fredii (strain NBRC 101917 / NGR234).